A 293-amino-acid polypeptide reads, in one-letter code: Energy-coupling factor transporter ATP-binding protein EcfA2 (293 aa).

One can recognise an ABC transporter domain in the interval 3-246 (ITFQKVEHRY…ADELEKIGVD (244 aa)). 40–47 (GHTGSGKS) lines the ATP pocket.

This sequence belongs to the ABC transporter superfamily. Energy-coupling factor EcfA family. As to quaternary structure, forms a stable energy-coupling factor (ECF) transporter complex composed of 2 membrane-embedded substrate-binding proteins (S component), 2 ATP-binding proteins (A component) and 2 transmembrane proteins (T component).

The protein resides in the cell membrane. Its function is as follows. ATP-binding (A) component of a common energy-coupling factor (ECF) ABC-transporter complex. Unlike classic ABC transporters this ECF transporter provides the energy necessary to transport a number of different substrates. The protein is Energy-coupling factor transporter ATP-binding protein EcfA2 of Bacillus anthracis.